The primary structure comprises 576 residues: (+)-alpha-terpineol synthase (576 aa).

(2E)-geranyl diphosphate contacts are provided by R286, D323, D327, R466, and N469. Residues D323 and D327 each contribute to the Mg(2+) site. The DDXXD motif motif lies at 323-327; the sequence is DDVYD. Mg(2+) contacts are provided by N469, T473, and E477.

This sequence belongs to the terpene synthase family. Tpsb subfamily. It depends on Mg(2+) as a cofactor. Mn(2+) serves as cofactor.

It carries out the reaction (2E)-geranyl diphosphate + H2O = (R)-alpha-terpineol + diphosphate. Its function is as follows. Monoterpene synthase producing mainly (+)-alpha-terpineol (44%) and (-)-limonene (33.6%) and lower amounts of (E)-geraniol (5.9%), linalool (5.0%), myrcene (3.4%), (-)-alpha-pinene (3.3%), (+)-sabinene (3.0%) and alpha-terpinolene (1.6%). The polypeptide is (+)-alpha-terpineol synthase (Santalum album (White sandalwood)).